The primary structure comprises 198 residues: NADH-quinone oxidoreductase subunit C (198 aa).

The protein belongs to the complex I 30 kDa subunit family. In terms of assembly, NDH-1 is composed of 14 different subunits. Subunits NuoB, C, D, E, F, and G constitute the peripheral sector of the complex.

The protein resides in the cell inner membrane. It carries out the reaction a quinone + NADH + 5 H(+)(in) = a quinol + NAD(+) + 4 H(+)(out). NDH-1 shuttles electrons from NADH, via FMN and iron-sulfur (Fe-S) centers, to quinones in the respiratory chain. The immediate electron acceptor for the enzyme in this species is believed to be ubiquinone. Couples the redox reaction to proton translocation (for every two electrons transferred, four hydrogen ions are translocated across the cytoplasmic membrane), and thus conserves the redox energy in a proton gradient. This chain is NADH-quinone oxidoreductase subunit C, found in Chromobacterium violaceum (strain ATCC 12472 / DSM 30191 / JCM 1249 / CCUG 213 / NBRC 12614 / NCIMB 9131 / NCTC 9757 / MK).